The primary structure comprises 283 residues: Bifunctional protein FolD (283 aa).

Residues Gly-166–Ser-168, Ser-191, and Thr-232 each bind NADP(+).

Belongs to the tetrahydrofolate dehydrogenase/cyclohydrolase family. Homodimer.

The enzyme catalyses (6R)-5,10-methylene-5,6,7,8-tetrahydrofolate + NADP(+) = (6R)-5,10-methenyltetrahydrofolate + NADPH. It carries out the reaction (6R)-5,10-methenyltetrahydrofolate + H2O = (6R)-10-formyltetrahydrofolate + H(+). Its pathway is one-carbon metabolism; tetrahydrofolate interconversion. Its function is as follows. Catalyzes the oxidation of 5,10-methylenetetrahydrofolate to 5,10-methenyltetrahydrofolate and then the hydrolysis of 5,10-methenyltetrahydrofolate to 10-formyltetrahydrofolate. This Halothermothrix orenii (strain H 168 / OCM 544 / DSM 9562) protein is Bifunctional protein FolD.